We begin with the raw amino-acid sequence, 307 residues long: Cytidine deaminase 7 (307 aa).

2 CMP/dCMP-type deaminase domains span residues 22 to 155 (TEPI…FTPD) and 185 to 307 (SDCS…FITE). Residue 63 to 65 (NVE) participates in substrate binding. Residue His-76 participates in Zn(2+) binding. Catalysis depends on Glu-78, which acts as the Proton donor. 2 residues coordinate Zn(2+): Cys-111 and Cys-114.

It belongs to the cytidine and deoxycytidylate deaminase family. In terms of assembly, homodimer. It depends on Zn(2+) as a cofactor.

It carries out the reaction cytidine + H2O + H(+) = uridine + NH4(+). It catalyses the reaction 2'-deoxycytidine + H2O + H(+) = 2'-deoxyuridine + NH4(+). Functionally, this enzyme scavenges exogenous and endogenous cytidine and 2'-deoxycytidine for UMP synthesis. The chain is Cytidine deaminase 7 (CDA7) from Arabidopsis thaliana (Mouse-ear cress).